The chain runs to 295 residues: Ornithine carbamoyltransferase, catabolic (295 aa).

Residues 49–52, Q76, R100, and 127–130 contribute to the carbamoyl phosphate site; these read STRT and HPCQ. Residues N155, D213, and 217–218 contribute to the L-ornithine site; that span reads SM. Carbamoyl phosphate is bound by residues 253–254 and R281; that span reads CL.

Belongs to the aspartate/ornithine carbamoyltransferase superfamily. OTCase family. In terms of assembly, homohexamer.

The protein localises to the cytoplasm. The enzyme catalyses carbamoyl phosphate + L-ornithine = L-citrulline + phosphate + H(+). The protein operates within amino-acid degradation; L-arginine degradation via ADI pathway; carbamoyl phosphate from L-arginine: step 2/2. Its activity is regulated as follows. Arginine lead to a slight activation. Inhibited by all nucleotide phosphates. Reversibly catalyzes the transfer of the carbamoyl group from carbamoyl phosphate (CP) to the N(epsilon) atom of ornithine (ORN) to produce L-citrulline. In Halobacterium salinarum (strain ATCC 700922 / JCM 11081 / NRC-1) (Halobacterium halobium), this protein is Ornithine carbamoyltransferase, catabolic (arcB).